A 79-amino-acid chain; its full sequence is Putative membrane protein insertion efficiency factor (79 aa).

Belongs to the UPF0161 family.

The protein resides in the cell inner membrane. In terms of biological role, could be involved in insertion of integral membrane proteins into the membrane. The polypeptide is Putative membrane protein insertion efficiency factor (Thermotoga neapolitana (strain ATCC 49049 / DSM 4359 / NBRC 107923 / NS-E)).